A 670-amino-acid chain; its full sequence is Oxidoreductase PigB (670 aa).

The first 19 residues, 1–19 (MIIQRLFGILYMLAGLAKA), serve as a signal peptide directing secretion. The next 4 helical transmembrane spans lie at 53 to 73 (GDVI…ILML), 76 to 96 (LWTT…VVIL), 98 to 118 (QSQP…LYML), and 238 to 258 (LVFF…VGFI).

Belongs to the flavin monoamine oxidase family. The cofactor is FAD.

Its subcellular location is the membrane. It participates in antibiotic biosynthesis; prodigiosin biosynthesis. Its function is as follows. Involved in the biosynthesis of 2-methyl-3-n-amyl-pyrrole (MAP), one of the terminal products involved in the biosynthesis of the red antibiotic prodigiosin (Pig). Catalyzes the oxidation of dihydro form of MAP (H2MAP) to yield MAP. This is Oxidoreductase PigB from Serratia sp. (strain ATCC 39006) (Prodigiosinella confusarubida).